Reading from the N-terminus, the 304-residue chain is Nucleotide-binding protein RHA1_ro07174 (304 aa).

G24–Q31 contributes to the ATP binding site. Residue D75–S78 participates in GTP binding.

Belongs to the RapZ-like family.

Displays ATPase and GTPase activities. The chain is Nucleotide-binding protein RHA1_ro07174 from Rhodococcus jostii (strain RHA1).